The chain runs to 599 residues: Endo-1,4-beta-xylanase B (599 aa).

Residues 1 to 37 form the signal peptide; it reads MTISASDYRHPGNFLKRTTALLCVGTALTALAFNASA. The 99-residue stretch at 38-136 folds into the CBM2 domain; the sequence is ACTYTIDSEW…TVTGAACNSA (99 aa). Cys-39 and Cys-133 are disulfide-bonded. Residues 163–289 form the CBM6 domain; that stretch reads LLQEAQAGFC…LPNIDSLSVV (127 aa). Positions 315–595 constitute a GH10 domain; that stretch reads SSSAASAKKF…RPAMTWLINN (281 aa). Glu-431 serves as the catalytic Proton donor. The Nucleophile role is filled by Glu-530.

It belongs to the glycosyl hydrolase 10 (cellulase F) family.

The enzyme catalyses Endohydrolysis of (1-&gt;4)-beta-D-xylosidic linkages in xylans.. It functions in the pathway glycan metabolism; hemicellulose degradation. Xylanase B contributes to hydrolyze hemicellulose, the major component of plant cell-walls. The protein is Endo-1,4-beta-xylanase B (xynB) of Cellvibrio japonicus (strain Ueda107) (Pseudomonas fluorescens subsp. cellulosa).